The chain runs to 323 residues: Delta-aminolevulinic acid dehydratase (323 aa).

Zn(2+) is bound by residues C118, C120, and C128. The active-site Schiff-base intermediate with substrate is the K193. 5-aminolevulinate is bound by residues R203 and R215. E231 serves as a coordination point for Mg(2+). Residue K246 is the Schiff-base intermediate with substrate of the active site. 5-aminolevulinate-binding residues include S272 and Y311.

This sequence belongs to the ALAD family. As to quaternary structure, homooctamer. Zn(2+) serves as cofactor.

The enzyme catalyses 2 5-aminolevulinate = porphobilinogen + 2 H2O + H(+). It participates in porphyrin-containing compound metabolism; protoporphyrin-IX biosynthesis; coproporphyrinogen-III from 5-aminolevulinate: step 1/4. Functionally, catalyzes an early step in the biosynthesis of tetrapyrroles. Binds two molecules of 5-aminolevulinate per subunit, each at a distinct site, and catalyzes their condensation to form porphobilinogen. The protein is Delta-aminolevulinic acid dehydratase (hemB) of Helicobacter pylori (strain J99 / ATCC 700824) (Campylobacter pylori J99).